Reading from the N-terminus, the 429-residue chain is Mannose-6-phosphate isomerase (429 aa).

The Zn(2+) site is built by Q109, H111, E136, and H281. Residue R300 is part of the active site.

It belongs to the mannose-6-phosphate isomerase type 1 family. It depends on Zn(2+) as a cofactor.

Its subcellular location is the cytoplasm. The enzyme catalyses D-mannose 6-phosphate = D-fructose 6-phosphate. It functions in the pathway nucleotide-sugar biosynthesis; GDP-alpha-D-mannose biosynthesis; alpha-D-mannose 1-phosphate from D-fructose 6-phosphate: step 1/2. Its function is as follows. Involved in the synthesis of the GDP-mannose and dolichol-phosphate-mannose required for a number of critical mannosyl transfer reactions. The polypeptide is Mannose-6-phosphate isomerase (PMI1) (Eremothecium gossypii (strain ATCC 10895 / CBS 109.51 / FGSC 9923 / NRRL Y-1056) (Yeast)).